The following is a 124-amino-acid chain: Testis-expressed protein 54 (124 aa).

Residues 1-10 (MGCCQDKDFE) show a composition bias toward basic and acidic residues. Disordered stretches follow at residues 1-77 (MGCC…SNES) and 90-124 (FGRR…PEKG). Residues 11-30 (MSDEQSKEEESEDGREDETT) are compositionally biased toward acidic residues. Basic and acidic residues-rich tracts occupy residues 34–50 (RGPR…RGEL) and 101–124 (RQPD…PEKG).

In terms of tissue distribution, expressed in Testis.

In Homo sapiens (Human), this protein is Testis-expressed protein 54.